The sequence spans 191 residues: GDP-mannose pyrophosphatase (191 aa).

GDP-alpha-D-mannose contacts are provided by residues tyrosine 17, 38 to 40, arginine 67, and 85 to 87; these read KRE and AGL. In terms of domain architecture, Nudix hydrolase spans 43 to 180; it reads DRGNGATILL…EIRDGKTVLL (138 aa). Residues alanine 85, glutamate 100, and glutamate 104 each contribute to the Mg(2+) site. The short motif at 86–106 is the Nudix box element; the sequence is GLLDNDEPEVCIRKEAIEETG. GDP-alpha-D-mannose-binding positions include glutamate 104, glutamate 127, 150 to 151, and lysine 176; that span reads DE. Glutamate 151 provides a ligand contact to Mg(2+).

Belongs to the Nudix hydrolase family. NudK subfamily. In terms of assembly, homodimer. It depends on Mg(2+) as a cofactor.

The enzyme catalyses GDP-alpha-D-mannose + H2O = alpha-D-mannose 1-phosphate + GMP + 2 H(+). Nucleoside diphosphate sugar hydrolase that hydrolyzes GDP-mannose as its preferred substrate, yielding GMP and mannose-1-phosphate. This chain is GDP-mannose pyrophosphatase (nudK), found in Shigella dysenteriae serotype 1 (strain Sd197).